Reading from the N-terminus, the 445-residue chain is Arginine biosynthesis bifunctional protein ArgJ, mitochondrial (445 aa).

6 residues coordinate substrate: Thr-189, Lys-215, Thr-226, Glu-312, Asn-440, and Ser-445. The Nucleophile role is filled by Thr-226.

This sequence belongs to the ArgJ family. In terms of assembly, heterodimer of an alpha and a beta chain. Post-translationally, the alpha and beta chains are autoproteolytically processed from a single precursor protein within the mitochondrion.

It localises to the mitochondrion matrix. The enzyme catalyses N(2)-acetyl-L-ornithine + L-glutamate = N-acetyl-L-glutamate + L-ornithine. The catalysed reaction is L-glutamate + acetyl-CoA = N-acetyl-L-glutamate + CoA + H(+). It participates in amino-acid biosynthesis; L-arginine biosynthesis; L-ornithine and N-acetyl-L-glutamate from L-glutamate and N(2)-acetyl-L-ornithine (cyclic): step 1/1. Its pathway is amino-acid biosynthesis; L-arginine biosynthesis; N(2)-acetyl-L-ornithine from L-glutamate: step 1/4. Its function is as follows. Catalyzes two activities which are involved in the cyclic version of arginine biosynthesis: the synthesis of acetylglutamate from glutamate and acetyl-CoA, and of ornithine by transacetylation between acetylornithine and glutamate. The sequence is that of Arginine biosynthesis bifunctional protein ArgJ, mitochondrial from Schizosaccharomyces pombe (strain 972 / ATCC 24843) (Fission yeast).